A 181-amino-acid polypeptide reads, in one-letter code: MKQLLDFLPLVIFFAVYKFFDIYIASGALIAATALQLVISYLLYKKLEKMHLITFVMVTVFGSLTLILHDDSFIKWKVTIVYALFAIALGVSQIMNKPLLKSMLGKELIVEDKIWARVTWYWVSFFVVCGLVNIYVAFSLSQETWVNFKVFGLTALTLINTVLTVVYLFKNMSEEDRKELK.

The next 5 membrane-spanning stretches (helical) occupy residues 10–30 (LVIFFAVYKFFDIYIASGALI), 50–70 (MHLITFVMVTVFGSLTLILHD), 72–92 (SFIKWKVTIVYALFAIALGVS), 118–138 (VTWYWVSFFVVCGLVNIYVAF), and 148–168 (FKVFGLTALTLINTVLTVVYL).

The protein belongs to the YciB family.

It localises to the cell inner membrane. In terms of biological role, plays a role in cell envelope biogenesis, maintenance of cell envelope integrity and membrane homeostasis. This is Inner membrane-spanning protein YciB from Shewanella pealeana (strain ATCC 700345 / ANG-SQ1).